The sequence spans 150 residues: UPF0756 membrane protein PC1_1142 (150 aa).

The next 4 helical transmembrane spans lie at 1–21 (MAYLDPTLLILLVLAGLGIIS), 51–71 (YGLSIGIVILTIGVMAPIASG), 82–102 (FLHWKSLLAILIGVAVSWLGG), and 127–147 (ALFRGVPVGPLIAAGLLSLLI).

The protein belongs to the UPF0756 family.

The protein resides in the cell membrane. This is UPF0756 membrane protein PC1_1142 from Pectobacterium carotovorum subsp. carotovorum (strain PC1).